A 59-amino-acid polypeptide reads, in one-letter code: Potassium channel toxin alpha-KTx 4.1 (59 aa).

The first 22 residues, 1–22, serve as a signal peptide directing secretion; sequence MKAFYGILIIFILISMIDLSKQ. 3 disulfide bridges follow: cysteine 29/cysteine 50, cysteine 35/cysteine 55, and cysteine 39/cysteine 57. The interval 48 to 55 is interaction with Ca(2+)-activated K(+) channels; it reads GKCMNGKC.

The protein belongs to the short scorpion toxin superfamily. Potassium channel inhibitor family. Alpha-KTx 04 subfamily. Expressed by the venom gland.

Its subcellular location is the secreted. Its function is as follows. Potently blocks Kv1.1/KCNA1 (85%), Kv1.2/KCNA2 (91%), Kv1.3/KCNA3 (89%), Kv1.6/KCNA6 (94%), and Shaker (97%). The chain is Potassium channel toxin alpha-KTx 4.1 from Tityus serrulatus (Brazilian scorpion).